Here is a 508-residue protein sequence, read N- to C-terminus: Photosystem II CP47 reaction center protein (508 aa).

6 helical membrane-spanning segments follow: residues 21-36, 101-115, 140-156, 203-218, 237-252, and 457-472; these read SVHIMHTALVAGWAGS, IVFSGLCFLAAIWHW, GIHLFLSGVACFGFGAF, IAAGTLGILAGLFHLS, VLSSSIAAVFFAAFVV, and SFALLFFFGHIWHGAR.

Belongs to the PsbB/PsbC family. PsbB subfamily. PSII is composed of 1 copy each of membrane proteins PsbA, PsbB, PsbC, PsbD, PsbE, PsbF, PsbH, PsbI, PsbJ, PsbK, PsbL, PsbM, PsbT, PsbX, PsbY, PsbZ, Psb30/Ycf12, at least 3 peripheral proteins of the oxygen-evolving complex and a large number of cofactors. It forms dimeric complexes. Binds multiple chlorophylls. PSII binds additional chlorophylls, carotenoids and specific lipids. is required as a cofactor.

The protein localises to the plastid. Its subcellular location is the chloroplast thylakoid membrane. Functionally, one of the components of the core complex of photosystem II (PSII). It binds chlorophyll and helps catalyze the primary light-induced photochemical processes of PSII. PSII is a light-driven water:plastoquinone oxidoreductase, using light energy to abstract electrons from H(2)O, generating O(2) and a proton gradient subsequently used for ATP formation. This is Photosystem II CP47 reaction center protein from Olimarabidopsis pumila (Dwarf rocket).